Here is a 179-residue protein sequence, read N- to C-terminus: MNRLKEKYLKEVTPALMSKFNYKSIMQVPKIEKIVINMGVGDAVQNPKALDSAVEELTLIAGQKPVVTRAKKSIAGFRLRAGMPIGAKVTLRGERMYDFLDKLISVSLPRVRDFRGVSKKSFDGRGNYTLGIKEQLIFPEIDYDKVNKVRGMDIVIVTTAKTDEEARELLTLLGMPFQK.

Belongs to the universal ribosomal protein uL5 family. As to quaternary structure, part of the 50S ribosomal subunit; part of the 5S rRNA/L5/L18/L25 subcomplex. Contacts the 5S rRNA and the P site tRNA. Forms a bridge to the 30S subunit in the 70S ribosome.

In terms of biological role, this is one of the proteins that bind and probably mediate the attachment of the 5S RNA into the large ribosomal subunit, where it forms part of the central protuberance. In the 70S ribosome it contacts protein S13 of the 30S subunit (bridge B1b), connecting the 2 subunits; this bridge is implicated in subunit movement. Contacts the P site tRNA; the 5S rRNA and some of its associated proteins might help stabilize positioning of ribosome-bound tRNAs. This chain is Large ribosomal subunit protein uL5, found in Geobacillus sp. (strain WCH70).